The chain runs to 512 residues: 2-isopropylmalate synthase (512 aa).

The region spanning 5–267 is the Pyruvate carboxyltransferase domain; it reads VVIFDTTLRD…ETSINKSEIY (263 aa). D14, H202, H204, and N238 together coordinate Mn(2+). Residues 391–512 are regulatory domain; it reads SLEYLHITSG…LPKAKTERAV (122 aa).

The protein belongs to the alpha-IPM synthase/homocitrate synthase family. LeuA type 1 subfamily. As to quaternary structure, homodimer. Mn(2+) is required as a cofactor.

It localises to the cytoplasm. It catalyses the reaction 3-methyl-2-oxobutanoate + acetyl-CoA + H2O = (2S)-2-isopropylmalate + CoA + H(+). It participates in amino-acid biosynthesis; L-leucine biosynthesis; L-leucine from 3-methyl-2-oxobutanoate: step 1/4. Its function is as follows. Catalyzes the condensation of the acetyl group of acetyl-CoA with 3-methyl-2-oxobutanoate (2-ketoisovalerate) to form 3-carboxy-3-hydroxy-4-methylpentanoate (2-isopropylmalate). This chain is 2-isopropylmalate synthase, found in Heliobacterium modesticaldum (strain ATCC 51547 / Ice1).